Reading from the N-terminus, the 196-residue chain is MIVGLRGTIIRLEPMYAEIDVGGVIYGMQMSLNATSMLQTKIDSQPDAPVKIICAQIIREDAHLLFGFCEEIEKQTFERLIKISGVGPKVAIAILSTYTPTHFAKIIADKDIEALKKVPGIGVKGAAKIMVDIAGFFAQLLQSQEESIAPSNNLKYEASLALQSLGFKRNEIQKVLEHIEALSVSEIVKEALKRLA.

A domain I region spans residues 1 to 69; that stretch reads MIVGLRGTII…EDAHLLFGFC (69 aa). Positions 70–148 are domain II; that stretch reads EEIEKQTFER…QLLQSQEESI (79 aa). Residues 149 to 157 form a flexible linker region; the sequence is APSNNLKYE. Positions 157–196 are domain III; sequence EASLALQSLGFKRNEIQKVLEHIEALSVSEIVKEALKRLA.

The protein belongs to the RuvA family. In terms of assembly, homotetramer. Forms an RuvA(8)-RuvB(12)-Holliday junction (HJ) complex. HJ DNA is sandwiched between 2 RuvA tetramers; dsDNA enters through RuvA and exits via RuvB. An RuvB hexamer assembles on each DNA strand where it exits the tetramer. Each RuvB hexamer is contacted by two RuvA subunits (via domain III) on 2 adjacent RuvB subunits; this complex drives branch migration. In the full resolvosome a probable DNA-RuvA(4)-RuvB(12)-RuvC(2) complex forms which resolves the HJ.

It is found in the cytoplasm. The RuvA-RuvB-RuvC complex processes Holliday junction (HJ) DNA during genetic recombination and DNA repair, while the RuvA-RuvB complex plays an important role in the rescue of blocked DNA replication forks via replication fork reversal (RFR). RuvA specifically binds to HJ cruciform DNA, conferring on it an open structure. The RuvB hexamer acts as an ATP-dependent pump, pulling dsDNA into and through the RuvAB complex. HJ branch migration allows RuvC to scan DNA until it finds its consensus sequence, where it cleaves and resolves the cruciform DNA. This is Holliday junction branch migration complex subunit RuvA from Helicobacter hepaticus (strain ATCC 51449 / 3B1).